Consider the following 306-residue polypeptide: D-alanine--D-alanine ligase B (306 aa).

Residues Glu-15 and Ser-150 contribute to the active site. In terms of domain architecture, ATP-grasp spans 101–303 (KLLWQGAGLP…FSQLVVRILE (203 aa)). 134-189 (ISALGLPVIVKPSREGSSVGMSKVVAENALQDALRLAFQHDEEVLIEKWLSGPEFT) is an ATP binding site. Mg(2+) is bound by residues Asp-257, Glu-270, and Asn-272. Residue Ser-281 is part of the active site.

Belongs to the D-alanine--D-alanine ligase family. Monomer. The cofactor is Mg(2+). It depends on Mn(2+) as a cofactor.

It is found in the cytoplasm. It carries out the reaction 2 D-alanine + ATP = D-alanyl-D-alanine + ADP + phosphate + H(+). It participates in cell wall biogenesis; peptidoglycan biosynthesis. Cell wall formation. The chain is D-alanine--D-alanine ligase B (ddlB) from Escherichia coli (strain K12).